The primary structure comprises 226 residues: Deoxyribose-phosphate aldolase (226 aa).

Residue Asp94 is the Proton donor/acceptor of the active site. Catalysis depends on Lys156, which acts as the Schiff-base intermediate with acetaldehyde. The active-site Proton donor/acceptor is Lys185.

Belongs to the DeoC/FbaB aldolase family. DeoC type 1 subfamily.

The protein localises to the cytoplasm. The enzyme catalyses 2-deoxy-D-ribose 5-phosphate = D-glyceraldehyde 3-phosphate + acetaldehyde. It functions in the pathway carbohydrate degradation; 2-deoxy-D-ribose 1-phosphate degradation; D-glyceraldehyde 3-phosphate and acetaldehyde from 2-deoxy-alpha-D-ribose 1-phosphate: step 2/2. Functionally, catalyzes a reversible aldol reaction between acetaldehyde and D-glyceraldehyde 3-phosphate to generate 2-deoxy-D-ribose 5-phosphate. This chain is Deoxyribose-phosphate aldolase, found in Burkholderia orbicola (strain MC0-3).